The chain runs to 398 residues: Cysteine protease ATG4A (398 aa).

Catalysis depends on cysteine 77, which acts as the Nucleophile. Residues aspartate 279 and histidine 281 contribute to the active site. An LIR motif is present at residues 393–396 (FEIL).

It belongs to the peptidase C54 family. As to quaternary structure, interacts with ATG9A; the interaction is direct.

The protein localises to the cytoplasm. It catalyses the reaction [protein]-C-terminal L-amino acid-glycyl-phosphatidylethanolamide + H2O = [protein]-C-terminal L-amino acid-glycine + a 1,2-diacyl-sn-glycero-3-phosphoethanolamine. Its activity is regulated as follows. Inhibited by N-ethylmaleimide. Redox-regulated during autophagy since reducing conditions activate ATG4A whereas an oxidizing environment such as the presence of H(2)O(2) inhibits its activity. In terms of biological role, cysteine protease that plays a key role in autophagy by mediating both proteolytic activation and delipidation of ATG8 family proteins. The protease activity is required for proteolytic activation of ATG8 family proteins: cleaves the C-terminal amino acid of ATG8 proteins to reveal a C-terminal glycine. Exposure of the glycine at the C-terminus is essential for ATG8 proteins conjugation to phosphatidylethanolamine (PE) and insertion to membranes, which is necessary for autophagy. Preferred substrate is GABARAPL2 followed by MAP1LC3A and GABARAP. Protease activity is also required to counteract formation of high-molecular weight conjugates of ATG8 proteins (ATG8ylation): acts as a deubiquitinating-like enzyme that removes ATG8 conjugated to other proteins, such as ATG3. In addition to the protease activity, also mediates delipidation of ATG8 family proteins. Catalyzes delipidation of PE-conjugated forms of ATG8 proteins during macroautophagy. Compared to ATG4B, the major protein for proteolytic activation of ATG8 proteins, shows weaker ability to cleave the C-terminal amino acid of ATG8 proteins, while it displays stronger delipidation activity. Involved in phagophore growth during mitophagy independently of its protease activity and of ATG8 proteins: acts by regulating ATG9A trafficking to mitochondria and promoting phagophore-endoplasmic reticulum contacts during the lipid transfer phase of mitophagy. This is Cysteine protease ATG4A from Homo sapiens (Human).